The primary structure comprises 538 residues: Putative outer membrane porin BglH (538 aa).

Residues 1–25 form the signal peptide; it reads MFRRNIITSAILLMAPLAFSAQSLA.

The protein belongs to the porin LamB (TC 1.B.3) family.

The protein localises to the cell outer membrane. May be a sugar porin with a broad carbohydrate specificity. The sequence is that of Putative outer membrane porin BglH (bglH) from Escherichia coli O6:H1 (strain CFT073 / ATCC 700928 / UPEC).